A 227-amino-acid chain; its full sequence is Protein SSO0193 (227 aa).

Residues E15 to I209 form the AMMECR1 domain.

The protein is Protein SSO0193 of Saccharolobus solfataricus (strain ATCC 35092 / DSM 1617 / JCM 11322 / P2) (Sulfolobus solfataricus).